The sequence spans 141 residues: Nucleoside diphosphate kinase (141 aa).

The ATP site is built by Lys-11, Phe-59, Arg-87, Thr-93, Arg-104, and Asn-114. Catalysis depends on His-117, which acts as the Pros-phosphohistidine intermediate.

Belongs to the NDK family. Homotetramer. Requires Mg(2+) as cofactor.

It localises to the cytoplasm. It catalyses the reaction a 2'-deoxyribonucleoside 5'-diphosphate + ATP = a 2'-deoxyribonucleoside 5'-triphosphate + ADP. It carries out the reaction a ribonucleoside 5'-diphosphate + ATP = a ribonucleoside 5'-triphosphate + ADP. In terms of biological role, major role in the synthesis of nucleoside triphosphates other than ATP. The ATP gamma phosphate is transferred to the NDP beta phosphate via a ping-pong mechanism, using a phosphorylated active-site intermediate. This Neisseria meningitidis serogroup A / serotype 4A (strain DSM 15465 / Z2491) protein is Nucleoside diphosphate kinase.